A 167-amino-acid polypeptide reads, in one-letter code: Centrin-3 (167 aa).

EF-hand domains are found at residues 25–60 (EQKQEIKDAFELFDTDKDQAIDYHELKVAMRALGFD), 61–96 (VKKADVLKILKDYDREATGKITFEDFNEVVTDWILE), 98–133 (DPHEEILKAFKLFDDDDSGKISLRNLRRVARELGEN), and 134–167 (MSDEELRAMIEEFDKDGDGEINQEEFIAIMTGDI). Residues aspartate 38, aspartate 40, aspartate 42, and glutamate 49 each coordinate Ca(2+). Phosphoserine is present on serine 135. Ca(2+) contacts are provided by aspartate 147, aspartate 149, aspartate 151, glutamate 153, and glutamate 158.

It belongs to the centrin family. As to quaternary structure, monomer. Component of the TREX-2 complex (transcription and export complex 2), composed of at least ENY2, GANP, PCID2, SEM1, and either centrin CETN2 or CETN3. Interacts with USP49.

It is found in the cytoplasm. The protein localises to the cytoskeleton. It localises to the microtubule organizing center. Its subcellular location is the centrosome. The protein resides in the nucleus. It is found in the nucleolus. The protein localises to the nucleus envelope. It localises to the nuclear pore complex. Its subcellular location is the centriole. In terms of biological role, plays a fundamental role in microtubule-organizing center structure and function. As a component of the TREX-2 complex, involved in the export of mRNAs to the cytoplasm through the nuclear pores. In Mus musculus (Mouse), this protein is Centrin-3 (Cetn3).